The primary structure comprises 307 residues: 2-haloacid dehalogenase, configuration-inverting (307 aa).

Belongs to the HAD-like hydrolase superfamily. S-2-haloalkanoic acid dehalogenase family. In terms of assembly, homodimer.

The enzyme catalyses an (S)-2-haloacid + H2O = a (2R)-2-hydroxycarboxylate + a halide anion + H(+). It carries out the reaction an (R)-2-haloacid + H2O = a (2S)-2-hydroxycarboxylate + a halide anion + H(+). Dehalogenates both (S)- and (R)-2-haloalkanoic acids to the corresponding (R)- and (S)-hydroxyalkanoic acids, respectively, with inversion of configuration at C-2. Acts on 2-haloalkanoic acids whose carbon chain lengths are five or less. This Pseudomonas sp. (strain 113) protein is 2-haloacid dehalogenase, configuration-inverting.